The primary structure comprises 90 residues: Large ribosomal subunit protein bL31 (90 aa).

The segment at 65–90 (YSKQEGSGSKSNKSKSTKSKKGKGKK) is disordered. Over residues 76–90 (NKSKSTKSKKGKGKK) the composition is skewed to basic residues.

Belongs to the bacterial ribosomal protein bL31 family. Type A subfamily. As to quaternary structure, part of the 50S ribosomal subunit.

Binds the 23S rRNA. The polypeptide is Large ribosomal subunit protein bL31 (Trichodesmium erythraeum (strain IMS101)).